We begin with the raw amino-acid sequence, 119 residues long: Protein phosphatase EYA3 (119 aa).

It belongs to the HAD-like hydrolase superfamily. EYA family. It depends on Mg(2+) as a cofactor.

The protein resides in the cytoplasm. It is found in the nucleus. It carries out the reaction O-phospho-L-tyrosyl-[protein] + H2O = L-tyrosyl-[protein] + phosphate. Functionally, tyrosine phosphatase that specifically dephosphorylates 'Tyr-142' of histone H2AX (H2AXY142ph). 'Tyr-142' phosphorylation of histone H2AX plays a central role in DNA repair and acts as a mark that distinguishes between apoptotic and repair responses to genotoxic stress. Promotes efficient DNA repair by dephosphorylating H2AX, promoting the recruitment of DNA repair complexes containing MDC1. Its function as histone phosphatase probably explains its role in transcription regulation during organogenesis. May be involved in development of the eye. In Gallus gallus (Chicken), this protein is Protein phosphatase EYA3 (EYA3).